The chain runs to 249 residues: Phosphoribosylaminoimidazole-succinocarboxamide synthase (249 aa).

Belongs to the SAICAR synthetase family.

The catalysed reaction is 5-amino-1-(5-phospho-D-ribosyl)imidazole-4-carboxylate + L-aspartate + ATP = (2S)-2-[5-amino-1-(5-phospho-beta-D-ribosyl)imidazole-4-carboxamido]succinate + ADP + phosphate + 2 H(+). It functions in the pathway purine metabolism; IMP biosynthesis via de novo pathway; 5-amino-1-(5-phospho-D-ribosyl)imidazole-4-carboxamide from 5-amino-1-(5-phospho-D-ribosyl)imidazole-4-carboxylate: step 1/2. The sequence is that of Phosphoribosylaminoimidazole-succinocarboxamide synthase from Roseiflexus sp. (strain RS-1).